The sequence spans 224 residues: Methylamine utilization ferredoxin-type protein MauM (224 aa).

A signal peptide spans 1–41 (MEARMTGRRKVTRRDAMADAARAVGVACLGGFSLAALVRTA). 4Fe-4S ferredoxin-type domains are found at residues 54–84 (ALPEQDFLAACVHCGLCVQACPYGTLSLAEW), 91–124 (GTPFFTPREVPCYMCKDVPCARACPTGALDRDIP), 133–169 (VAVLVGHETCLNYKGLNCSICVRVCPIRGDAISLEPQ), and 177–208 (MIPVVHSASCTGCGTCEKQCVLGHAAIRVLPR). Cys64, Cys67, Cys70, Cys74, Cys102, Cys105, Cys110, Cys114, Cys142, Cys150, Cys153, Cys157, Cys186, Cys189, Cys192, and Cys196 together coordinate [4Fe-4S] cluster.

Its pathway is one-carbon metabolism; methylamine degradation. Involved in electron transfer. This Paracoccus denitrificans (strain Pd 1222) protein is Methylamine utilization ferredoxin-type protein MauM (mauM).